A 211-amino-acid chain; its full sequence is Histidine biosynthesis bifunctional protein HisIE (211 aa).

A phosphoribosyl-AMP cyclohydrolase region spans residues 1 to 117 (MSTQTNTKSD…CWLDGNAHPF (117 aa)). A phosphoribosyl-ATP pyrophosphohydrolase region spans residues 118 to 211 (LNNLAELIAS…LARHQKAQRK (94 aa)).

This sequence in the N-terminal section; belongs to the PRA-CH family. The protein in the C-terminal section; belongs to the PRA-PH family.

The protein resides in the cytoplasm. The catalysed reaction is 1-(5-phospho-beta-D-ribosyl)-ATP + H2O = 1-(5-phospho-beta-D-ribosyl)-5'-AMP + diphosphate + H(+). It carries out the reaction 1-(5-phospho-beta-D-ribosyl)-5'-AMP + H2O = 1-(5-phospho-beta-D-ribosyl)-5-[(5-phospho-beta-D-ribosylamino)methylideneamino]imidazole-4-carboxamide. The protein operates within amino-acid biosynthesis; L-histidine biosynthesis; L-histidine from 5-phospho-alpha-D-ribose 1-diphosphate: step 2/9. It functions in the pathway amino-acid biosynthesis; L-histidine biosynthesis; L-histidine from 5-phospho-alpha-D-ribose 1-diphosphate: step 3/9. This chain is Histidine biosynthesis bifunctional protein HisIE, found in Shewanella oneidensis (strain ATCC 700550 / JCM 31522 / CIP 106686 / LMG 19005 / NCIMB 14063 / MR-1).